The primary structure comprises 768 residues: DNA replication licensing factor MCM3 homolog 1 (768 aa).

The 208-residue stretch at 290-497 (TFDLLGNSLA…IDRQISEHVA (208 aa)) folds into the MCM domain. 340 to 347 (GDPSVAKS) serves as a coordination point for ATP. An Arginine finger motif is present at residues 472 to 475 (SRFD). Positions 662–687 (MKQQAEHDAGATGGTVDGHGSSGNDP) are disordered. Over residues 672-682 (ATGGTVDGHGS) the composition is skewed to gly residues.

Belongs to the MCM family.

The protein resides in the nucleus. The enzyme catalyses ATP + H2O = ADP + phosphate + H(+). Its function is as follows. Acts as a factor that allows the DNA to undergo a single round of replication per cell cycle. Required for DNA replication and cell proliferation. May act as a component of the MCM complex which is the putative replicative helicase of the replication licensing system in eukaryotic cells. In Zea mays (Maize), this protein is DNA replication licensing factor MCM3 homolog 1 (ROA1).